The following is a 415-amino-acid chain: uncharacterized protein (415 aa).

3 disordered regions span residues 39–77 (FLPP…RPIH), 220–247 (AEDK…HPLT), and 346–415 (VTLN…NGSK). 3 stretches are compositionally biased toward basic and acidic residues: residues 220–238 (AEDK…ESKN), 365–380 (DVNK…DKHM), and 400–415 (SKTE…NGSK).

This is an uncharacterized protein from Rattus norvegicus (Rat).